The following is a 470-amino-acid chain: tRNA modification GTPase MnmE (470 aa).

(6S)-5-formyl-5,6,7,8-tetrahydrofolate is bound by residues R24, E81, and K122. Residues 218 to 383 enclose the TrmE-type G domain; sequence GIKIVIAGKP…LQEYLSNNIK (166 aa). N228 is a K(+) binding site. GTP-binding positions include 228 to 233, 247 to 253, and 272 to 275; these read NAGKSS, STISGTT, and DTAG. Residue S232 coordinates Mg(2+). K(+)-binding residues include S247, I249, and T252. T253 is a Mg(2+) binding site. K470 contacts (6S)-5-formyl-5,6,7,8-tetrahydrofolate.

It belongs to the TRAFAC class TrmE-Era-EngA-EngB-Septin-like GTPase superfamily. TrmE GTPase family. In terms of assembly, homodimer. Heterotetramer of two MnmE and two MnmG subunits. K(+) serves as cofactor.

It localises to the cytoplasm. In terms of biological role, exhibits a very high intrinsic GTPase hydrolysis rate. Involved in the addition of a carboxymethylaminomethyl (cmnm) group at the wobble position (U34) of certain tRNAs, forming tRNA-cmnm(5)s(2)U34. This chain is tRNA modification GTPase MnmE, found in Blochmanniella pennsylvanica (strain BPEN).